The following is a 622-amino-acid chain: Probable potassium transport system protein Kup (622 aa).

12 helical membrane passes run 7–27, 44–64, 95–115, 133–153, 165–185, 199–219, 243–263, 290–310, 338–358, 370–390, 395–415, and 422–442; these read LAIGAIGIVFGDIGTSPLYAF, VLGVVSLIFWSMTLIVAIQYV, GWLVVLLGVFATSLFYGDSMI, PELQGFVIPIALVLLVGLFVL, FAPVMIVYFTVIATLGLISIV, AVLFFINDGFLAFLALGSVVL, WFGFVMPCLLLNYFGQGAMIV, LVILATFATFIASQAVISGAF, IYIPVINWALMVAVILLVLTF, IAVTGAVTIDTLLMAVLLVGV, WYYAAPVVIVFLIIDGAYFAA, and DGGWFPLVVGLIVFTLLTTWA.

Belongs to the HAK/KUP transporter (TC 2.A.72) family.

The protein localises to the cell inner membrane. It catalyses the reaction K(+)(in) + H(+)(in) = K(+)(out) + H(+)(out). In terms of biological role, transport of potassium into the cell. Likely operates as a K(+):H(+) symporter. In Erythrobacter litoralis (strain HTCC2594), this protein is Probable potassium transport system protein Kup.